A 246-amino-acid polypeptide reads, in one-letter code: Uridylate kinase (246 aa).

16 to 19 (KFSG) lines the ATP pocket. Gly58 contacts UMP. Residues Gly59 and Arg63 each contribute to the ATP site. UMP-binding positions include Asp78 and 139-146 (TGNPFFTT). Thr166, Tyr172, and Asp175 together coordinate ATP.

This sequence belongs to the UMP kinase family. In terms of assembly, homohexamer.

The protein localises to the cytoplasm. The enzyme catalyses UMP + ATP = UDP + ADP. The protein operates within pyrimidine metabolism; CTP biosynthesis via de novo pathway; UDP from UMP (UMPK route): step 1/1. Inhibited by UTP. Its function is as follows. Catalyzes the reversible phosphorylation of UMP to UDP. This is Uridylate kinase from Legionella pneumophila (strain Corby).